A 393-amino-acid polypeptide reads, in one-letter code: Phosphoglycerate kinase (393 aa).

Substrate contacts are provided by residues 21 to 23, Arg36, 59 to 62, Arg114, and Arg147; these read DIN and HFGR. Residues Lys197, Glu319, and 349 to 352 each bind ATP; that span reads GGDT.

It belongs to the phosphoglycerate kinase family. In terms of assembly, monomer.

Its subcellular location is the cytoplasm. It catalyses the reaction (2R)-3-phosphoglycerate + ATP = (2R)-3-phospho-glyceroyl phosphate + ADP. The protein operates within carbohydrate degradation; glycolysis; pyruvate from D-glyceraldehyde 3-phosphate: step 2/5. The sequence is that of Phosphoglycerate kinase from Dinoroseobacter shibae (strain DSM 16493 / NCIMB 14021 / DFL 12).